Reading from the N-terminus, the 211-residue chain is Arginine exporter protein ArgO (211 aa).

Helical transmembrane passes span 1–21, 37–57, 68–88, 111–131, 147–167, and 179–199; these read MISYYFQGFALGAAMILPLGP, LMIALLCALSDLVLISAGIFG, LLALVTWGGVAFLLWYGFGAL, IIATMLAVTWLNPHVYLDTFV, WFALGTISASFLWFFGLALLA, and AQRIINILVGVVMWLIAFQLA.

It belongs to the LysE/ArgO transporter (TC 2.A.75) family.

The protein localises to the cell inner membrane. The enzyme catalyses L-arginine(in) = L-arginine(out). Functionally, involved in the export of arginine. Important to control the intracellular level of arginine and the correct balance between arginine and lysine. The chain is Arginine exporter protein ArgO from Salmonella paratyphi C (strain RKS4594).